Reading from the N-terminus, the 192-residue chain is Probable chorismate pyruvate-lyase (192 aa).

Substrate is bound by residues arginine 85, leucine 120, and glutamate 176.

Belongs to the UbiC family.

It localises to the cytoplasm. It catalyses the reaction chorismate = 4-hydroxybenzoate + pyruvate. Its pathway is cofactor biosynthesis; ubiquinone biosynthesis. Its function is as follows. Removes the pyruvyl group from chorismate, with concomitant aromatization of the ring, to provide 4-hydroxybenzoate (4HB) for the ubiquinone pathway. This chain is Probable chorismate pyruvate-lyase, found in Pseudoalteromonas atlantica (strain T6c / ATCC BAA-1087).